Consider the following 693-residue polypeptide: Elongation factor G (693 aa).

The 275-residue stretch at 8–282 folds into the tr-type G domain; sequence KNTRNIGIMA…AAIEYLPSPL (275 aa). GTP contacts are provided by residues 17–24, 81–85, and 135–138; these read AHIDAGKT, DTPGH, and NKMD.

The protein belongs to the TRAFAC class translation factor GTPase superfamily. Classic translation factor GTPase family. EF-G/EF-2 subfamily.

It is found in the cytoplasm. Its function is as follows. Catalyzes the GTP-dependent ribosomal translocation step during translation elongation. During this step, the ribosome changes from the pre-translocational (PRE) to the post-translocational (POST) state as the newly formed A-site-bound peptidyl-tRNA and P-site-bound deacylated tRNA move to the P and E sites, respectively. Catalyzes the coordinated movement of the two tRNA molecules, the mRNA and conformational changes in the ribosome. The polypeptide is Elongation factor G (Macrococcus caseolyticus (strain JCSC5402) (Macrococcoides caseolyticum)).